Consider the following 174-residue polypeptide: Ribosome rescue factor SmrB (174 aa).

The 76-residue stretch at 96 to 171 (LDLHGLTQQQ…GDAAILVLIE (76 aa)) folds into the Smr domain.

The protein belongs to the SmrB family. As to quaternary structure, associates with collided ribosomes, but not with correctly translating polysomes.

Its function is as follows. Acts as a ribosome collision sensor. Detects stalled/collided disomes (pairs of ribosomes where the leading ribosome is stalled and a second ribosome has collided with it) and endonucleolytically cleaves mRNA at the 5' boundary of the stalled ribosome. Stalled/collided disomes form a new interface (primarily via the 30S subunits) that binds SmrB. Cleaved mRNA becomes available for tmRNA ligation, leading to ribosomal subunit dissociation and rescue of stalled ribosomes. The polypeptide is Ribosome rescue factor SmrB (Tolumonas auensis (strain DSM 9187 / NBRC 110442 / TA 4)).